The following is a 202-amino-acid chain: Glycerol-3-phosphate acyltransferase (202 aa).

6 helical membrane-spanning segments follow: residues 2–22 (MIVIMLILSYLIGAFPSGYVI), 54–74 (FLVTFLDIFKGFIVVFFPLWL), 88–108 (NGLIVGAFAILGHVYPVYLGF), 120–140 (VILGVNPVLLLILAAIFFGIL), 141–161 (YLTKYVSLSSIIASICCVIGA), and 162–182 (LLIRDYILFIVSIGVGVLLII).

The protein belongs to the PlsY family. In terms of assembly, probably interacts with PlsX.

It is found in the cell membrane. The enzyme catalyses an acyl phosphate + sn-glycerol 3-phosphate = a 1-acyl-sn-glycero-3-phosphate + phosphate. It participates in lipid metabolism; phospholipid metabolism. Catalyzes the transfer of an acyl group from acyl-phosphate (acyl-PO(4)) to glycerol-3-phosphate (G3P) to form lysophosphatidic acid (LPA). This enzyme utilizes acyl-phosphate as fatty acyl donor, but not acyl-CoA or acyl-ACP. The chain is Glycerol-3-phosphate acyltransferase from Staphylococcus saprophyticus subsp. saprophyticus (strain ATCC 15305 / DSM 20229 / NCIMB 8711 / NCTC 7292 / S-41).